The primary structure comprises 182 residues: GTP cyclohydrolase 1 (182 aa).

3 residues coordinate Zn(2+): Cys-73, His-76, and Cys-144.

It belongs to the GTP cyclohydrolase I family. As to quaternary structure, homomer.

It catalyses the reaction GTP + H2O = 7,8-dihydroneopterin 3'-triphosphate + formate + H(+). Its pathway is cofactor biosynthesis; 7,8-dihydroneopterin triphosphate biosynthesis; 7,8-dihydroneopterin triphosphate from GTP: step 1/1. This is GTP cyclohydrolase 1 from Hydrogenobaculum sp. (strain Y04AAS1).